We begin with the raw amino-acid sequence, 940 residues long: DNA gyrase subunit A (940 aa).

Positions 1 to 22 (MSDHTNPPSAPPDDDPNGGSLL) are disordered. Residues 48–538 (LPDARDGLKP…SLADQDDESL (491 aa)) form the Topo IIA-type catalytic domain. Tyr-136 functions as the O-(5'-phospho-DNA)-tyrosine intermediate in the catalytic mechanism. A GyrA-box motif is present at residues 565–571 (QHRGGRG). Acidic residues predominate over residues 914–924 (ESVDDNGDDAD). Positions 914–940 (ESVDDNGDDADSVAPAAPDGQVTDSDD) are disordered.

This sequence belongs to the type II topoisomerase GyrA/ParC subunit family. Heterotetramer, composed of two GyrA and two GyrB chains. In the heterotetramer, GyrA contains the active site tyrosine that forms a transient covalent intermediate with DNA, while GyrB binds cofactors and catalyzes ATP hydrolysis.

It is found in the cytoplasm. It carries out the reaction ATP-dependent breakage, passage and rejoining of double-stranded DNA.. In terms of biological role, a type II topoisomerase that negatively supercoils closed circular double-stranded (ds) DNA in an ATP-dependent manner to modulate DNA topology and maintain chromosomes in an underwound state. Negative supercoiling favors strand separation, and DNA replication, transcription, recombination and repair, all of which involve strand separation. Also able to catalyze the interconversion of other topological isomers of dsDNA rings, including catenanes and knotted rings. Type II topoisomerases break and join 2 DNA strands simultaneously in an ATP-dependent manner. This chain is DNA gyrase subunit A, found in Granulibacter bethesdensis (strain ATCC BAA-1260 / CGDNIH1).